The primary structure comprises 605 residues: Isocitrate dehydrogenase kinase/phosphatase (605 aa).

ATP is bound by residues alanine 353–threonine 359 and lysine 374. Residue aspartate 413 is part of the active site.

The protein belongs to the AceK family.

It is found in the cytoplasm. The enzyme catalyses L-seryl-[isocitrate dehydrogenase] + ATP = O-phospho-L-seryl-[isocitrate dehydrogenase] + ADP + H(+). Bifunctional enzyme which can phosphorylate or dephosphorylate isocitrate dehydrogenase (IDH) on a specific serine residue. This is a regulatory mechanism which enables bacteria to bypass the Krebs cycle via the glyoxylate shunt in response to the source of carbon. When bacteria are grown on glucose, IDH is fully active and unphosphorylated, but when grown on acetate or ethanol, the activity of IDH declines drastically concomitant with its phosphorylation. In Rhodopseudomonas palustris (strain HaA2), this protein is Isocitrate dehydrogenase kinase/phosphatase.